We begin with the raw amino-acid sequence, 339 residues long: tRNA N6-adenosine threonylcarbamoyltransferase (339 aa).

Positions 111 and 115 each coordinate Fe cation. Substrate is bound by residues 134–138 (VVSGG), Asp-167, Gly-180, and Asn-279. Asp-307 contacts Fe cation.

It belongs to the KAE1 / TsaD family. Requires Fe(2+) as cofactor.

It is found in the cytoplasm. It carries out the reaction L-threonylcarbamoyladenylate + adenosine(37) in tRNA = N(6)-L-threonylcarbamoyladenosine(37) in tRNA + AMP + H(+). Its function is as follows. Required for the formation of a threonylcarbamoyl group on adenosine at position 37 (t(6)A37) in tRNAs that read codons beginning with adenine. Is involved in the transfer of the threonylcarbamoyl moiety of threonylcarbamoyl-AMP (TC-AMP) to the N6 group of A37, together with TsaE and TsaB. TsaD likely plays a direct catalytic role in this reaction. In Syntrophobacter fumaroxidans (strain DSM 10017 / MPOB), this protein is tRNA N6-adenosine threonylcarbamoyltransferase.